The primary structure comprises 793 residues: Spindle and centriole-associated protein 1 (793 aa).

The tract at residues 1 to 29 is disordered; that stretch reads MSYLRASRTSSNLSLAKKPSKTRKKLQAR. A compositionally biased stretch (basic residues) spans 18-27; sequence KPSKTRKKLQ. Residues 312-405 are a coiled coil; sequence SLGLLNSMIM…LTAEILSLKE (94 aa). A disordered region spans residues 519 to 542; it reads KTVGNLSSHSAVPKRAANRLPSPP. A coiled-coil region spans residues 622 to 712; the sequence is LQNEDLVSQM…LLKLIEQQKQ (91 aa). A compositionally biased stretch (polar residues) spans 718 to 739; the sequence is PTLSPITPQGRRTGSSLDTTPL. Positions 718 to 783 are disordered; it reads PTLSPITPQG…RSQAANDRGE (66 aa). A compositionally biased stretch (low complexity) spans 740–753; the sequence is SSCSTSGRRSSGAS. The span at 754 to 778 shows a compositional bias: polar residues; that stretch reads NKSESISTSVGSLRSASTGRRSQAA.

Its subcellular location is the cytoplasm. It is found in the cytoskeleton. It localises to the microtubule organizing center. The protein resides in the centrosome. The protein localises to the centriole. Its subcellular location is the spindle. Regulator required for centriole duplication. This Xenopus laevis (African clawed frog) protein is Spindle and centriole-associated protein 1 (spice1).